The following is a 205-amino-acid chain: Methylthioribulose-1-phosphate dehydratase (205 aa).

Histidine 96 and histidine 98 together coordinate Zn(2+).

This sequence belongs to the aldolase class II family. MtnB subfamily. It depends on Zn(2+) as a cofactor.

It carries out the reaction 5-(methylsulfanyl)-D-ribulose 1-phosphate = 5-methylsulfanyl-2,3-dioxopentyl phosphate + H2O. It participates in amino-acid biosynthesis; L-methionine biosynthesis via salvage pathway; L-methionine from S-methyl-5-thio-alpha-D-ribose 1-phosphate: step 2/6. Its function is as follows. Catalyzes the dehydration of methylthioribulose-1-phosphate (MTRu-1-P) into 2,3-diketo-5-methylthiopentyl-1-phosphate (DK-MTP-1-P). The sequence is that of Methylthioribulose-1-phosphate dehydratase from Pseudomonas aeruginosa (strain LESB58).